Here is a 480-residue protein sequence, read N- to C-terminus: Protein nucleotidyltransferase YdiU (480 aa).

Positions 86, 88, 89, 109, 121, 122, 172, and 179 each coordinate ATP. Catalysis depends on Asp248, which acts as the Proton acceptor. Mg(2+) contacts are provided by Asn249 and Asp258. An ATP-binding site is contributed by Asp258.

This sequence belongs to the SELO family. The cofactor is Mg(2+). It depends on Mn(2+) as a cofactor.

It catalyses the reaction L-seryl-[protein] + ATP = 3-O-(5'-adenylyl)-L-seryl-[protein] + diphosphate. It carries out the reaction L-threonyl-[protein] + ATP = 3-O-(5'-adenylyl)-L-threonyl-[protein] + diphosphate. The enzyme catalyses L-tyrosyl-[protein] + ATP = O-(5'-adenylyl)-L-tyrosyl-[protein] + diphosphate. The catalysed reaction is L-histidyl-[protein] + UTP = N(tele)-(5'-uridylyl)-L-histidyl-[protein] + diphosphate. It catalyses the reaction L-seryl-[protein] + UTP = O-(5'-uridylyl)-L-seryl-[protein] + diphosphate. It carries out the reaction L-tyrosyl-[protein] + UTP = O-(5'-uridylyl)-L-tyrosyl-[protein] + diphosphate. Nucleotidyltransferase involved in the post-translational modification of proteins. It can catalyze the addition of adenosine monophosphate (AMP) or uridine monophosphate (UMP) to a protein, resulting in modifications known as AMPylation and UMPylation. In Salmonella heidelberg (strain SL476), this protein is Protein nucleotidyltransferase YdiU.